Here is a 116-residue protein sequence, read N- to C-terminus: Subtilisin inhibitor-like protein 4 (116 aa).

Intrachain disulfides connect cysteine 38-cysteine 53 and cysteine 74-cysteine 104.

It belongs to the protease inhibitor I16 (SSI) family. In terms of assembly, homodimer.

Its subcellular location is the secreted. Functionally, inhibitor of subtilisin BPN' and trypsin. This chain is Subtilisin inhibitor-like protein 4, found in Streptomyces lavendulae.